We begin with the raw amino-acid sequence, 152 residues long: Xanthine-guanine phosphoribosyltransferase (152 aa).

Residues 37–38 and 88–96 each bind 5-phospho-alpha-D-ribose 1-diphosphate; these read RG and DDLVDTGNT. Aspartate 89 is a binding site for Mg(2+). 2 residues coordinate guanine: aspartate 92 and isoleucine 135. Aspartate 92 and isoleucine 135 together coordinate xanthine. Residues 92–96 and 134–135 contribute to the GMP site; these read DTGNT and WI.

The protein belongs to the purine/pyrimidine phosphoribosyltransferase family. XGPT subfamily. In terms of assembly, homotetramer. It depends on Mg(2+) as a cofactor.

It is found in the cell inner membrane. It carries out the reaction GMP + diphosphate = guanine + 5-phospho-alpha-D-ribose 1-diphosphate. The enzyme catalyses XMP + diphosphate = xanthine + 5-phospho-alpha-D-ribose 1-diphosphate. The catalysed reaction is IMP + diphosphate = hypoxanthine + 5-phospho-alpha-D-ribose 1-diphosphate. The protein operates within purine metabolism; GMP biosynthesis via salvage pathway; GMP from guanine: step 1/1. It participates in purine metabolism; XMP biosynthesis via salvage pathway; XMP from xanthine: step 1/1. Its function is as follows. Purine salvage pathway enzyme that catalyzes the transfer of the ribosyl-5-phosphate group from 5-phospho-alpha-D-ribose 1-diphosphate (PRPP) to the N9 position of the 6-oxopurines guanine and xanthine to form the corresponding ribonucleotides GMP (guanosine 5'-monophosphate) and XMP (xanthosine 5'-monophosphate), with the release of PPi. To a lesser extent, also acts on hypoxanthine. The polypeptide is Xanthine-guanine phosphoribosyltransferase (Actinobacillus succinogenes (strain ATCC 55618 / DSM 22257 / CCUG 43843 / 130Z)).